Consider the following 175-residue polypeptide: MMTYIVFILSIVFVMSFVGFATKPSPIYGGLVLIISGGIGCAIVLNFGGSFLGLMVFLIYLGGMLVVFGYTTAMATEQYPEVWVSNKAVLAAFITGLLSELLTACYILKDDEVEVVLKFNGMGDWVIYDTGDSGFFSEEAMGIAALYSYGTWLVVVTGWSLLIGVLVIMEVTRGN.

The next 5 membrane-spanning stretches (helical) occupy residues 1-21, 25-45, 47-67, 88-108, and 149-169; these read MMTYIVFILSIVFVMSFVGFA, SPIYGGLVLIISGGIGCAIVL, FGGSFLGLMVFLIYLGGMLVV, AVLAAFITGLLSELLTACYIL, and YGTWLVVVTGWSLLIGVLVIM.

It belongs to the complex I subunit 6 family. As to quaternary structure, core subunit of respiratory chain NADH dehydrogenase (Complex I) which is composed of 45 different subunits.

The protein resides in the mitochondrion inner membrane. It catalyses the reaction a ubiquinone + NADH + 5 H(+)(in) = a ubiquinol + NAD(+) + 4 H(+)(out). Functionally, core subunit of the mitochondrial membrane respiratory chain NADH dehydrogenase (Complex I) which catalyzes electron transfer from NADH through the respiratory chain, using ubiquinone as an electron acceptor. Essential for the catalytic activity and assembly of complex I. In Canis lupus familiaris (Dog), this protein is NADH-ubiquinone oxidoreductase chain 6 (MT-ND6).